Reading from the N-terminus, the 140-residue chain is Ribonuclease P protein component (140 aa).

The segment at 115–140 (RCKPGAPKPPPFKKRPNKSVKSNKQT) is disordered.

This sequence belongs to the RnpA family. Consists of a catalytic RNA component (M1 or rnpB) and a protein subunit.

The enzyme catalyses Endonucleolytic cleavage of RNA, removing 5'-extranucleotides from tRNA precursor.. Its function is as follows. RNaseP catalyzes the removal of the 5'-leader sequence from pre-tRNA to produce the mature 5'-terminus. It can also cleave other RNA substrates such as 4.5S RNA. The protein component plays an auxiliary but essential role in vivo by binding to the 5'-leader sequence and broadening the substrate specificity of the ribozyme. The chain is Ribonuclease P protein component from Pseudoalteromonas translucida (strain TAC 125).